A 598-amino-acid chain; its full sequence is F-box/WD repeat-containing protein 8 (598 aa).

Methionine 1 carries the post-translational modification N-acetylmethionine. Residues 17–93 (LAQAQAPKKR…RSPLAREGAG (77 aa)) are disordered. The segment covering 29–40 (PEAAERRARRPE) has biased composition (basic and acidic residues). Low complexity predominate over residues 61–71 (EGAGRPPAARA). Residues serine 83 and serine 85 each carry the phosphoserine modification. Positions 113–159 (PFFDIQLPYELAINIFQYLDRKELGRCAQVSKTWKVIAEDEVLWYRL) constitute an F-box domain. 8 WD repeats span residues 201–250 (AVSE…LESE), 259–299 (QPNV…FEHD), 300–340 (ARIQ…AEFE), 341–383 (VPKL…LLYA), 384–429 (HGPP…LKLG), 430–475 (NVLR…SAHQ), 476–513 (LRVSAVQMDDWKIVSGGEEGLVSVWDYRMNQKLWEVYS), and 514–561 (GHPV…AYEF).

Component of the Cul7-RING(FBXW8) complex consisting of CUL7, RBX1, SKP1 and FBXW8; within the complex interacts with CUL7 and SKP1. Interacts with GLMN isoform 1. Interacts with OBSL1, CUL1, CUL2, CCT6B, PFDN5, CCT2, CCT3, CCT6A, CCT7, VBP1, CCDC8, ARF1, TRIP13, PDCD5 and GORASP1. Interacts with MAP4K1/HPK1 (when autophosphorylated). Associated component of the 3M complex. Interacts with POUF51 (when phosphorylated on 'Ser-355'). Phosphorylation at Ser-85 by mTORC2 promotes FBXW8 stabilization, allowing its translocation to the cytosol in response to insulin.

The protein localises to the cytoplasm. The protein resides in the perinuclear region. It is found in the golgi apparatus. It participates in protein modification; protein ubiquitination. Functionally, substrate-recognition component of the Cul7-RING(FBXW8) ubiquitin ligase complex, which mediates the ubiquitination and subsequent proteasomal degradation of target proteins. The Cul7-RING(FBXW8) complex mediates ubiquitination and consequent degradation of GORASP1, acting as a component of the ubiquitin ligase pathway that regulates Golgi morphogenesis and dendrite patterning in brain. Mediates ubiquitination and degradation of IRS1 in a mTOR-dependent manner: the Cul7-RING(FBXW8) complex recognizes and binds IRS1 previously phosphorylated by S6 kinase (RPS6KB1 or RPS6KB2). The Cul7-RING(FBXW8) complex also mediates ubiquitination of MAP4K1/HPK1: recognizes and binds autophosphorylated MAP4K1/HPK1, leading to its degradation, thereby affecting cell proliferation and differentiation. The Cul7-RING(FBXW8) complex also mediates ubiquitination of phosphorylated cyclin-D1 (CCND1). The Cul7-RING(FBXW8) complex is however not a major regulator of CCND1 stability during the G1/S transition. Associated component of the 3M complex, suggesting that it mediates some of 3M complex functions. This chain is F-box/WD repeat-containing protein 8, found in Homo sapiens (Human).